We begin with the raw amino-acid sequence, 344 residues long: Holliday junction branch migration complex subunit RuvB (344 aa).

The interval 1–182 (MRIELLNTPV…FGISNRFDYY (182 aa)) is large ATPase domain (RuvB-L). Residues Ile-21, Arg-22, Gly-63, Lys-66, Thr-67, Thr-68, 129 to 131 (EDF), Arg-172, Tyr-182, and Arg-219 each bind ATP. Thr-67 serves as a coordination point for Mg(2+). The small ATPAse domain (RuvB-S) stretch occupies residues 183 to 253 (PPELLETILM…TAMKTLDSLE (71 aa)). Positions 256–344 (EEGLDEMDKK…GTLFDGQEHV (89 aa)) are head domain (RuvB-H). Residues Arg-311 and Arg-316 each coordinate DNA.

It belongs to the RuvB family. In terms of assembly, homohexamer. Forms an RuvA(8)-RuvB(12)-Holliday junction (HJ) complex. HJ DNA is sandwiched between 2 RuvA tetramers; dsDNA enters through RuvA and exits via RuvB. An RuvB hexamer assembles on each DNA strand where it exits the tetramer. Each RuvB hexamer is contacted by two RuvA subunits (via domain III) on 2 adjacent RuvB subunits; this complex drives branch migration. In the full resolvosome a probable DNA-RuvA(4)-RuvB(12)-RuvC(2) complex forms which resolves the HJ.

The protein localises to the cytoplasm. It carries out the reaction ATP + H2O = ADP + phosphate + H(+). The RuvA-RuvB-RuvC complex processes Holliday junction (HJ) DNA during genetic recombination and DNA repair, while the RuvA-RuvB complex plays an important role in the rescue of blocked DNA replication forks via replication fork reversal (RFR). RuvA specifically binds to HJ cruciform DNA, conferring on it an open structure. The RuvB hexamer acts as an ATP-dependent pump, pulling dsDNA into and through the RuvAB complex. RuvB forms 2 homohexamers on either side of HJ DNA bound by 1 or 2 RuvA tetramers; 4 subunits per hexamer contact DNA at a time. Coordinated motions by a converter formed by DNA-disengaged RuvB subunits stimulates ATP hydrolysis and nucleotide exchange. Immobilization of the converter enables RuvB to convert the ATP-contained energy into a lever motion, pulling 2 nucleotides of DNA out of the RuvA tetramer per ATP hydrolyzed, thus driving DNA branch migration. The RuvB motors rotate together with the DNA substrate, which together with the progressing nucleotide cycle form the mechanistic basis for DNA recombination by continuous HJ branch migration. Branch migration allows RuvC to scan DNA until it finds its consensus sequence, where it cleaves and resolves cruciform DNA. The sequence is that of Holliday junction branch migration complex subunit RuvB from Chlorobium luteolum (strain DSM 273 / BCRC 81028 / 2530) (Pelodictyon luteolum).